The primary structure comprises 282 residues: Biotin synthase (282 aa).

One can recognise a Radical SAM core domain in the interval 1–228 (MQEIFLCSIS…NARLMVAGGR (228 aa)). [4Fe-4S] cluster contacts are provided by Cys17, Cys21, and Cys24. 4 residues coordinate [2Fe-2S] cluster: Cys61, Cys96, Cys154, and Arg221.

The protein belongs to the radical SAM superfamily. Biotin synthase family. As to quaternary structure, homodimer. [4Fe-4S] cluster serves as cofactor. It depends on [2Fe-2S] cluster as a cofactor.

It catalyses the reaction (4R,5S)-dethiobiotin + (sulfur carrier)-SH + 2 reduced [2Fe-2S]-[ferredoxin] + 2 S-adenosyl-L-methionine = (sulfur carrier)-H + biotin + 2 5'-deoxyadenosine + 2 L-methionine + 2 oxidized [2Fe-2S]-[ferredoxin]. Its pathway is cofactor biosynthesis; biotin biosynthesis; biotin from 7,8-diaminononanoate: step 2/2. Functionally, catalyzes the conversion of dethiobiotin (DTB) to biotin by the insertion of a sulfur atom into dethiobiotin via a radical-based mechanism. The polypeptide is Biotin synthase (Helicobacter pylori (strain HPAG1)).